The following is a 482-amino-acid chain: MNAAEIVMPALGPALPELILTVGALVLILYGALRGERSTEGVTVGAIIVLIVALFSVVSQPLGAKITTFNGSFIVDGFARVMKTLTLVGSLAALLLARDLFARERIERFEYPILIVLSSIGMLIMASANDLIGLYLGLELQSLAAYVIASFHRDDVRSTEAGLKYFVLGALSSGMLLYGASLVYGFTGSVSFPGIVTALREAHAGLGLVLGIVFVAAGVAFKLAAVPFHMWTPDVYEGAPTPVTAFFASAPKMAAMAMTVRVFIGAFPGVVAEWQQIIVFIAIASMALGSFAAIGQRNLKRLMAYSSIGNVGYALIGLAAGTEEGVRGVVVYMAIYLAMTLGAFAVILGMRRGNRMFETIEDLSGLSRTHPWLAFCLAMMMFSLAGIPPLAGFFAKFYVFAAAIKAGLNVLAVIGVVTSVVGAYYYVRIVKIMYFDDAQAAYEPLAPGLRIVLAASSVVVVLFWIVPAPLVAAAGTAARSLF.

A run of 13 helical transmembrane segments spans residues 10–30, 44–64, 77–97, 113–133, 166–186, 206–226, 243–265, 277–296, 302–322, 328–348, 374–394, 397–417, and 451–471; these read ALGP…LILY, VGAI…PLGA, GFAR…LLLA, ILIV…DLIG, FVLG…VYGF, LGLV…LAAV, VTAF…VFIG, IIVF…AIGQ, LMAY…AAGT, GVVV…AVIL, AFCL…AGFF, FYVF…IGVV, and IVLA…APLV.

This sequence belongs to the complex I subunit 2 family. In terms of assembly, NDH-1 is composed of 14 different subunits. Subunits NuoA, H, J, K, L, M, N constitute the membrane sector of the complex.

Its subcellular location is the cell inner membrane. It carries out the reaction a quinone + NADH + 5 H(+)(in) = a quinol + NAD(+) + 4 H(+)(out). Functionally, NDH-1 shuttles electrons from NADH, via FMN and iron-sulfur (Fe-S) centers, to quinones in the respiratory chain. The immediate electron acceptor for the enzyme in this species is believed to be ubiquinone. Couples the redox reaction to proton translocation (for every two electrons transferred, four hydrogen ions are translocated across the cytoplasmic membrane), and thus conserves the redox energy in a proton gradient. The protein is NADH-quinone oxidoreductase subunit N of Methylobacterium nodulans (strain LMG 21967 / CNCM I-2342 / ORS 2060).